The chain runs to 68 residues: Antimicrobial peptide UyCT5 (68 aa).

The first 23 residues, 1 to 23 (MKNQFAILLLAVVFLQLISQSDA), serve as a signal peptide directing secretion. Leucine 36 carries the leucine amide modification. Residues 40–68 (GLKNADRLDELFDGDISDADLDFLRELMR) constitute a propeptide that is removed on maturation.

It belongs to the non-disulfide-bridged peptide (NDBP) superfamily. Short antimicrobial peptide (group 4) family. Expressed by the venom gland.

The protein resides in the secreted. The protein localises to the target cell membrane. In terms of biological role, antimicrobial peptide that inhibits the growth of Gram-positive (S.aureus, MIC=1 uM) and Gram-negative bacteria (E.coli, MIC=15 uM and P.aeruginosa, MIC=2 uM). It also shows 37% of hemolysis when 15 uM are tested (93% at 50 uM). The chain is Antimicrobial peptide UyCT5 from Urodacus yaschenkoi (Inland robust scorpion).